The primary structure comprises 88 residues: uncharacterized protein (88 aa).

2 helical membrane passes run 8 to 28 and 45 to 65; these read IFLS…SIFF and ELLR…VINL.

It is found in the membrane. This is an uncharacterized protein from Saccharomyces cerevisiae (strain ATCC 204508 / S288c) (Baker's yeast).